A 157-amino-acid chain; its full sequence is Beta-defensin 125 (157 aa).

A signal peptide spans Met-1–Gly-20. Disulfide bonds link Cys-27/Cys-55, Cys-35/Cys-49, and Cys-39/Cys-56. The tract at residues Gly-109–Asn-157 is disordered. Low complexity predominate over residues Glu-110–Thr-145.

This sequence belongs to the beta-defensin family.

It localises to the secreted. In terms of biological role, has antibacterial activity. The chain is Beta-defensin 125 (DEFB125) from Gorilla gorilla gorilla (Western lowland gorilla).